The chain runs to 397 residues: Staphylopine export protein (397 aa).

12 helical membrane-spanning segments follow: residues 12–32, 38–58, 77–97, 102–122, 134–154, 158–178, 217–237, 239–259, 285–305, 309–329, 337–357, and 363–383; these read LYIL…FIPL, GATN…AMVF, IILI…LEGY, VMQG…IIDA, LYSL…VGIW, NISL…FFGY, GIIM…VPLY, VSLG…AVVA, LLVI…IIFY, ILIG…LSFV, MLLG…GALM, and LVGF…IMIM.

It belongs to the major facilitator superfamily.

Its subcellular location is the cell membrane. Involved in the export of the metallophore staphylopine. This is Staphylopine export protein from Staphylococcus aureus (strain Mu50 / ATCC 700699).